Here is a 319-residue protein sequence, read N- to C-terminus: ATP-dependent 6-phosphofructokinase (319 aa).

Glycine 11 is an ATP binding site. 21-25 contributes to the ADP binding site; the sequence is RAVVR. ATP-binding positions include 72–73 and 102–105; these read RC and GDGS. Aspartate 103 provides a ligand contact to Mg(2+). Residue 125-127 participates in substrate binding; that stretch reads TID. The active-site Proton acceptor is aspartate 127. Arginine 154 is a binding site for ADP. Substrate-binding positions include arginine 162 and 169–171; that span reads MGR. ADP-binding positions include 185–187, arginine 211, and 213–215; these read GAE and KLH. Substrate is bound by residues glutamate 222, arginine 243, and 249 to 252; that span reads HIQR.

Belongs to the phosphofructokinase type A (PFKA) family. ATP-dependent PFK group I subfamily. Prokaryotic clade 'B1' sub-subfamily. Homotetramer. It depends on Mg(2+) as a cofactor.

The protein localises to the cytoplasm. It catalyses the reaction beta-D-fructose 6-phosphate + ATP = beta-D-fructose 1,6-bisphosphate + ADP + H(+). The protein operates within carbohydrate degradation; glycolysis; D-glyceraldehyde 3-phosphate and glycerone phosphate from D-glucose: step 3/4. Its activity is regulated as follows. Allosterically activated by ADP and other diphosphonucleosides, and allosterically inhibited by phosphoenolpyruvate. Catalyzes the phosphorylation of D-fructose 6-phosphate to fructose 1,6-bisphosphate by ATP, the first committing step of glycolysis. This is ATP-dependent 6-phosphofructokinase from Alkaliphilus metalliredigens (strain QYMF).